Consider the following 178-residue polypeptide: Cytochrome b6-f complex iron-sulfur subunit (178 aa).

Residues 20 to 42 (LLTFGTATGVALGALYPVANYFM) traverse the membrane as a helical segment. In terms of domain architecture, Rieske spans 65–161 (KTGWLANHQA…VDVDDDAVLV (97 aa)). Residues cysteine 107, histidine 109, cysteine 125, and histidine 128 each coordinate [2Fe-2S] cluster. Cysteine 112 and cysteine 127 are oxidised to a cystine.

It belongs to the Rieske iron-sulfur protein family. In terms of assembly, the 4 large subunits of the cytochrome b6-f complex are cytochrome b6, subunit IV (17 kDa polypeptide, PetD), cytochrome f and the Rieske protein, while the 4 small subunits are PetG, PetL, PetM and PetN. The complex functions as a dimer. [2Fe-2S] cluster is required as a cofactor.

The protein localises to the cellular thylakoid membrane. The enzyme catalyses 2 oxidized [plastocyanin] + a plastoquinol + 2 H(+)(in) = 2 reduced [plastocyanin] + a plastoquinone + 4 H(+)(out). Its function is as follows. Component of the cytochrome b6-f complex, which mediates electron transfer between photosystem II (PSII) and photosystem I (PSI), cyclic electron flow around PSI, and state transitions. This Prochlorococcus marinus (strain MIT 9515) protein is Cytochrome b6-f complex iron-sulfur subunit.